Reading from the N-terminus, the 367-residue chain is 2-oxoisovalerate dehydrogenase subunit alpha (367 aa).

Residues F66, Y95, 128 to 131 (MPEH), and S144 each bind substrate. 94-96 (YYR) provides a ligand contact to thiamine diphosphate. Residues 144–146 (SPI), 174–180 (GDGATSE), 204–208 (NFYAI), and H273 each bind thiamine diphosphate. Residues D175, N204, and Y206 each contribute to the Mg(2+) site.

It belongs to the BCKDHA family. Heterotetramer of two alpha and two beta chains. Directly associated with ODBB in the E1 complex. Thiamine diphosphate serves as cofactor.

The enzyme catalyses N(6)-[(R)-lipoyl]-L-lysyl-[protein] + 3-methyl-2-oxobutanoate + H(+) = N(6)-[(R)-S(8)-2-methylpropanoyldihydrolipoyl]-L-lysyl-[protein] + CO2. Its function is as follows. The branched-chain alpha-keto dehydrogenase complex catalyzes the overall conversion of alpha-keto acids to acyl-CoA and CO(2). It contains multiple copies of three enzymatic components: branched-chain alpha-keto acid decarboxylase (E1), lipoamide acyltransferase (E2) and lipoamide dehydrogenase (E3). The chain is 2-oxoisovalerate dehydrogenase subunit alpha from Thermus thermophilus (strain ATCC 27634 / DSM 579 / HB8).